We begin with the raw amino-acid sequence, 385 residues long: WD repeat-containing protein 74 (385 aa).

6 WD repeats span residues 40-80 (RREE…FQGQ), 83-122 (CPGG…TSSD), 128-168 (RVGP…EPVF), 179-220 (DLRV…RRPV), 224-266 (TYGE…GCLK), and 267-306 (GLAG…GLEH). Position 214 is a phosphoserine (Ser-214). An N6-methyllysine modification is found at Lys-311. The required for nucleolar and nuclear location stretch occupies residues 320 to 385 (SGRDNWEDEP…KKKRPGSTSP (66 aa)). Disordered stretches follow at residues 323–345 (DNWE…DTET) and 360–385 (LSGL…STSP). Ser-361 carries the phosphoserine modification. Basic residues predominate over residues 372–385 (TRRRKKKRPGSTSP).

As to quaternary structure, isoform 1 interacts (through WDR repeats) with NVL; the interaction is independent of RNA or pre-60S ribosome particles. Isoform 2 does not interact with NVL. Interacts with MTREX; the interaction dissociation in a late stage of rRNA synthesis is required for appropriate maturation of pre-60S particles and depends on the ATPase activity of NVL.

It localises to the nucleus. It is found in the nucleolus. In terms of biological role, regulatory protein of the MTREX-exosome complex involved in the synthesis of the 60S ribosomal subunit. Participates in an early cleavage of the pre-rRNA processing pathway in cooperation with NVL. Required for blastocyst formation, is necessary for RNA transcription, processing and/or stability during preimplantation development. In Homo sapiens (Human), this protein is WD repeat-containing protein 74 (WDR74).